Consider the following 665-residue polypeptide: MAAGGSTQQRRREMAAASAAAISGAGRCRLSKIGATRRPPPARVRVAVRLRPFVDGTAGASDPPCVRGMDSCSLEIANWRNHQETLKYQFDAFYGERSTQQDIYAGSVQPILRHLLEGQNASVLAYGPTGAGKTHTMLGSPEQPGVIPRALMDLLQLTREEGAEGRPWALSVTMSYLEIYQEKVLDLLDPASGDLVIREDCRGNILIPGLSQKPISSFADFERHFLPASRNRTVGATRLNQRSSRSHAVLLVKVDQRERLAPFRQREGKLYLIDLAGSEDNRRTGNKGLRLKESGAINTSLFVLGKVVDALNQGLPRVPYRDSKLTRLLQDSLGGSAHSILIANIAPERRFYLDTVSALNFAARSKEVINRPFTNESLQPHALGPVKLSQKELLGPPEAKRARGPEEEEIGSPEPMAAPASASQKLSPLQKLSSMDPAMLERLLSLDRLLASQGSQGAPLLSTPKRERMVLMKTVEEKDLEIERLKTKQKELEAKMLAQKAEEKENHCPTMLRPLSHRTVTGAKPLKKAVVMPLQLIQEQAASPNAEIHILKNKGRKRKLESLDALEPEEKAEDCWELQISPELLAHGRQKILDLLNEGSARDLRSLQRIGPKKAQLIVGWRELHGPFSQVEDLERVEGITGKQMESFLKANILGLAAGQRCGAS.

A Kinesin motor domain is found at 43-368 (RVRVAVRLRP…LNFAARSKEV (326 aa)). 127-134 (GPTGAGKT) contributes to the ATP binding site. Residues 379-428 (QPHALGPVKLSQKELLGPPEAKRARGPEEEEIGSPEPMAAPASASQKLSP) are disordered. A phosphoserine mark is found at S412, S427, and S452. Low complexity predominate over residues 412 to 428 (SPEPMAAPASASQKLSP). K465 is covalently cross-linked (Glycyl lysine isopeptide (Lys-Gly) (interchain with G-Cter in SUMO2)). A coiled-coil region spans residues 465-508 (KRERMVLMKTVEEKDLEIERLKTKQKELEAKMLAQKAEEKENHC). A phosphoserine mark is found at S543, S562, and S581.

Belongs to the TRAFAC class myosin-kinesin ATPase superfamily. Kinesin family. As to quaternary structure, interacts with FAM83D. Interacts with SIAH1. Post-translationally, ubiquitinated; mediated by SIAH1 and leading to its subsequent proteasomal degradation. Expressed in bone, cartilage, joint capsule, ligament, skin, and primary cultured chondrocytes.

It localises to the nucleus. Its subcellular location is the cytoplasm. The protein localises to the cytoskeleton. Functionally, kinesin family member that is involved in spindle formation and the movements of chromosomes during mitosis and meiosis. Binds to microtubules and to DNA. Plays a role in congression of laterally attached chromosomes in NDC80-depleted cells. This is Kinesin-like protein KIF22 (KIF22) from Homo sapiens (Human).